A 333-amino-acid chain; its full sequence is NADH-quinone oxidoreductase subunit H (333 aa).

The next 8 helical transmembrane spans lie at 15–35 (FFIF…FVTY), 88–108 (FILA…VIPF), 117–137 (IGVG…GVVT), 159–179 (ISYE…AGSL), 191–211 (VWYI…AVAE), 239–259 (WAFF…LITV), 274–296 (IPGA…WFRV), and 313–333 (VLLP…ELFF).

It belongs to the complex I subunit 1 family. In terms of assembly, NDH-1 is composed of 14 different subunits. Subunits NuoA, H, J, K, L, M, N constitute the membrane sector of the complex.

The protein localises to the cell membrane. It carries out the reaction a quinone + NADH + 5 H(+)(in) = a quinol + NAD(+) + 4 H(+)(out). Functionally, NDH-1 shuttles electrons from NADH, via FMN and iron-sulfur (Fe-S) centers, to quinones in the respiratory chain. The immediate electron acceptor for the enzyme in this species is believed to be ubiquinone. Couples the redox reaction to proton translocation (for every two electrons transferred, four hydrogen ions are translocated across the cytoplasmic membrane), and thus conserves the redox energy in a proton gradient. This subunit may bind ubiquinone. The chain is NADH-quinone oxidoreductase subunit H from Bacillus cereus (strain G9842).